The sequence spans 306 residues: D-alanine--D-alanine ligase (306 aa).

Positions 100–295 (KQIFRRAGLP…FGQLLERLME (196 aa)) constitute an ATP-grasp domain. 127-180 (RLPYPLFVKSNTGGSSLRLGRARNRAELDDIMGQIFAAGEEVIMEPVLPGREVT) provides a ligand contact to ATP. Mg(2+) contacts are provided by Asp-249, Glu-262, and Asn-264.

The protein belongs to the D-alanine--D-alanine ligase family. Requires Mg(2+) as cofactor. Mn(2+) is required as a cofactor.

The protein localises to the cytoplasm. The enzyme catalyses 2 D-alanine + ATP = D-alanyl-D-alanine + ADP + phosphate + H(+). It functions in the pathway cell wall biogenesis; peptidoglycan biosynthesis. In terms of biological role, cell wall formation. In Desulfovibrio desulfuricans (strain ATCC 27774 / DSM 6949 / MB), this protein is D-alanine--D-alanine ligase.